The primary structure comprises 773 residues: Circadian clock protein PASD1 (773 aa).

Residues 30–102 (YDYFNQVTLQ…IILKFPLLNS (73 aa)) enclose the PAS domain. Residues 313 to 361 (SVDQEGPMDQQDPENPVAPLDQAGLMDPVDPEDSVDLGAAGASAQPLQP) are disordered. Residues 365 to 412 (VAYDIISQELELMKKLKEQLEERTWLLHDAIQNQQNALELMMDHLQKQ) are necessary for transcriptional repression. Positions 365–412 (VAYDIISQELELMKKLKEQLEERTWLLHDAIQNQQNALELMMDHLQKQ) form a coiled coil. Disordered stretches follow at residues 427 to 448 (SEAVPKKQQKQHAGQVKRPLPH), 506 to 569 (QRKV…QLQE), and 732 to 773 (GVEG…NKPC). Positions 475-553 (VAFNQQQLVQ…QERKKWQGQM (79 aa)) form a coiled coil. The span at 506-536 (QRKVQKQKKMQEKKKLQEQKMQEKKKLQEQR) shows a compositional bias: basic and acidic residues.

Interacts with the CLOCK-BMAL1 heterodimer; this interaction inhibits CLOCK-BMAL1 transcriptional activation and suppress circadian timekeeping. Interacts with BMAL1. As to expression, testis-specific. Expressed in a broad range of cancer cells, including melanoma, lung cancer, and breast cancer (at protein level). Testis-specific. Found in histologically normal tissues from patients with uterus, lung and small intestine cancers. Widespread expression seen in solid tumors and diffuse large B-cell lymphoma (DLBCL)-derived cell lines. Isoform 2 is expressed in all DLBCL-derived cell lines, while isoform 1 is preferentially expressed in cell lines derived from non-germinal center DLBCL.

It localises to the nucleus. Functionally, functions as a suppressor of the biological clock that drives the daily circadian rhythms of cells throughout the body. Acts as a nuclear repressor of the CLOCK-BMAL1 heterodimer-mediated transcriptional activation of the core clock components. Inhibits circadian clock function in cancer cells, when overexpressed. The polypeptide is Circadian clock protein PASD1 (Homo sapiens (Human)).